Consider the following 524-residue polypeptide: MLLQAAVQNRNVPLASSASYSRLLRCRSPVVSVAALSKKTAAIVCSISQVYGYGTVDYERRPIVQWNAIYKKISLMEKPELGAASVLNQWEKAGRKLTKWELCRVVKELRKYKRANQALEVYDWMNNRGERFRLSASDAAIQLDLIGKVRGIPDAEEFFLQLPENFKDRRVYGSLLNAYVRAKSREKAEALLNTMRDKGYALHPLPFNVMMTLYMNLREYDKVDAMVFEMKQKDIRLDIYSYNIWLSSCGSLGSVEKMELVYQQMKSDVSIYPNWTTFSTMATMYIKMGETEKAEDALRKVEARITGRNRIPYHYLLSLYGSLGNKKELYRVWHVYKSVVPSIPNLGYHALVSSLVRMGDIEGAEKVYEEWLPVKSSYDPRIPNLLMNAYVKNDQLETAEGLFDHMVEMGGKPSSSTWEILAVGHTRKRCISEALTCLRNAFSAEGSSNWRPKVLMLSGFFKLCEEESDVTSKEAVLELLRQSGDLEDKSYLALIDVDENRTVNNSEIDAHETDALLTQLQDDL.

PPR repeat units follow at residues 168–202 (DRRV…GYAL), 203–237 (HPLP…DIRL), 238–268 (DIYS…MKSD), 274–304 (NWTT…VEAR), 309–339 (NRIP…YKSV), 344–378 (PNLG…KSSY), and 379–413 (DPRI…GGKP).

The protein belongs to the PPR family. P subfamily.

The chain is Pentatricopeptide repeat-containing protein At1g02150 from Arabidopsis thaliana (Mouse-ear cress).